The following is a 419-amino-acid chain: Putative competence-damage inducible protein (419 aa).

Belongs to the CinA family.

The polypeptide is Putative competence-damage inducible protein (Lysinibacillus sphaericus (strain C3-41)).